The primary structure comprises 488 residues: L-arabinose isomerase 1 (488 aa).

Glutamate 306, glutamate 331, histidine 348, and histidine 447 together coordinate Mn(2+).

It belongs to the arabinose isomerase family. Mn(2+) is required as a cofactor.

The catalysed reaction is beta-L-arabinopyranose = L-ribulose. The protein operates within carbohydrate degradation; L-arabinose degradation via L-ribulose; D-xylulose 5-phosphate from L-arabinose (bacterial route): step 1/3. Functionally, catalyzes the conversion of L-arabinose to L-ribulose. The polypeptide is L-arabinose isomerase 1 (Clostridium acetobutylicum (strain ATCC 824 / DSM 792 / JCM 1419 / IAM 19013 / LMG 5710 / NBRC 13948 / NRRL B-527 / VKM B-1787 / 2291 / W)).